Here is a 177-residue protein sequence, read N- to C-terminus: CASP-like protein 2U1 (177 aa).

The helical transmembrane segment at 1-21 (MVLRIVASLLSIAALVLMAKD) threads the bilayer. At 22–48 (KQVVYLNLAGEELTLEAKHSYVEAFVY) the chain is on the cytoplasmic side. The chain crosses the membrane as a helical span at residues 49-69 (LVYSNGLVAIYCFLLVFALVF). Topologically, residues 70–80 (RLIDKAGCGKS) are extracellular. A helical membrane pass occupies residues 81 to 101 (AAWIIFLLDQGLAYVLLAAAA). The Cytoplasmic segment spans residues 102–131 (ASTEVAYVAKRGNNKVGWSEVCSTFGHFCN). The helical transmembrane segment at 132–152 (LVGVSIVITFISVLAMATLSV) threads the bilayer. Topologically, residues 153–177 (MSARRLFKTYGPERKQISSNDAPAI) are extracellular.

This sequence belongs to the Casparian strip membrane proteins (CASP) family. In terms of assembly, homodimer and heterodimers.

The protein localises to the cell membrane. The polypeptide is CASP-like protein 2U1 (Osmunda lancea (Fern)).